The chain runs to 216 residues: Holliday junction branch migration complex subunit RuvA (216 aa).

A domain I region spans residues 1–64 (MISFIKGVLI…EDAQQLYGFK (64 aa)). The segment at 65-143 (SKVDKKVFQE…KMANEIYAQT (79 aa)) is domain II. The tract at residues 144–163 (SGTTTTSQDSQAQQAPTSAV) is flexible linker. Residues 164–216 (LANSIFNESVDALLALGYKQKDAEKMSRSAMGDATTAAEVIRKALQGSIRSKR) are domain III.

Belongs to the RuvA family. As to quaternary structure, homotetramer. Forms an RuvA(8)-RuvB(12)-Holliday junction (HJ) complex. HJ DNA is sandwiched between 2 RuvA tetramers; dsDNA enters through RuvA and exits via RuvB. An RuvB hexamer assembles on each DNA strand where it exits the tetramer. Each RuvB hexamer is contacted by two RuvA subunits (via domain III) on 2 adjacent RuvB subunits; this complex drives branch migration. In the full resolvosome a probable DNA-RuvA(4)-RuvB(12)-RuvC(2) complex forms which resolves the HJ.

Its subcellular location is the cytoplasm. Its function is as follows. The RuvA-RuvB-RuvC complex processes Holliday junction (HJ) DNA during genetic recombination and DNA repair, while the RuvA-RuvB complex plays an important role in the rescue of blocked DNA replication forks via replication fork reversal (RFR). RuvA specifically binds to HJ cruciform DNA, conferring on it an open structure. The RuvB hexamer acts as an ATP-dependent pump, pulling dsDNA into and through the RuvAB complex. HJ branch migration allows RuvC to scan DNA until it finds its consensus sequence, where it cleaves and resolves the cruciform DNA. The sequence is that of Holliday junction branch migration complex subunit RuvA from Francisella tularensis subsp. novicida (strain U112).